Consider the following 485-residue polypeptide: Phosphoglucosamine mutase (485 aa).

Ser-133 (phosphoserine intermediate) is an active-site residue. Mg(2+) is bound by residues Ser-133, Asp-274, Asp-276, and Asp-278. Ser-133 is modified (phosphoserine).

The protein belongs to the phosphohexose mutase family. Requires Mg(2+) as cofactor. Activated by phosphorylation.

It carries out the reaction alpha-D-glucosamine 1-phosphate = D-glucosamine 6-phosphate. Its function is as follows. Catalyzes the conversion of glucosamine-6-phosphate to glucosamine-1-phosphate. This chain is Phosphoglucosamine mutase, found in Crocosphaera subtropica (strain ATCC 51142 / BH68) (Cyanothece sp. (strain ATCC 51142)).